A 799-amino-acid chain; its full sequence is E3 UFM1-protein ligase 1 homolog (799 aa).

The interval Thr-429–Asp-483 is disordered. Basic residues predominate over residues Lys-458–Lys-468. The span at Gln-469–Ile-478 shows a compositional bias: low complexity.

It belongs to the UFL1 family.

In terms of biological role, E3 UFM1-protein ligase that mediates ufmylation of target proteins. In Dictyostelium discoideum (Social amoeba), this protein is E3 UFM1-protein ligase 1 homolog.